Here is a 749-residue protein sequence, read N- to C-terminus: Ribosome-releasing factor 2, mitochondrial (749 aa).

The transit peptide at 1 to 22 directs the protein to the mitochondrion; it reads MLLLLCNRSVVPRGIRRILRTA. The tr-type G domain maps to 44-322; the sequence is KNIRNIGILA…AVLKYLPAPN (279 aa). Residues 53-60, 117-121, and 171-174 contribute to the GTP site; these read AHIDGGKT, DTPGH, and NKMD.

Belongs to the TRAFAC class translation factor GTPase superfamily. Classic translation factor GTPase family. EF-G/EF-2 subfamily.

Its subcellular location is the mitochondrion. Its function is as follows. Mitochondrial GTPase that mediates the disassembly of ribosomes from messenger RNA at the termination of mitochondrial protein biosynthesis. Not involved in the GTP-dependent ribosomal translocation step during translation elongation. The sequence is that of Ribosome-releasing factor 2, mitochondrial from Culex quinquefasciatus (Southern house mosquito).